Here is an 815-residue protein sequence, read N- to C-terminus: Phosphate transporter PHO1-2 (815 aa).

Over 1-421 (MVKFSREYEA…QQPRNTHMIT (421 aa)) the chain is Cytoplasmic. One can recognise an SPX domain in the interval 2–368 (VKFSREYEAS…EQQRATDLFS (367 aa)). Disordered stretches follow at residues 83 to 108 (SAGQQPSASEDEECPDRGELVRSTDK), 166 to 213 (RGLA…LELQ), and 242 to 266 (AGKKDGKTKDGSGKGRGGGGGGGGG). The segment covering 97–108 (PDRGELVRSTDK) has biased composition (basic and acidic residues). Positions 183 to 201 (PPSSVHGSSGRYLLSGLSS) are enriched in low complexity. The span at 202-213 (PQSMSDGSLELQ) shows a compositional bias: polar residues. Residues 243–254 (GKKDGKTKDGSG) are compositionally biased toward basic and acidic residues. Gly residues predominate over residues 255–266 (KGRGGGGGGGGG). The chain crosses the membrane as a helical span at residues 422-442 (FLVGLFTGTFVSLFIIYAILA). Residues 443–458 (HVSGIFTSTGNSAYME) lie on the Extracellular side of the membrane. The chain crosses the membrane as a helical span at residues 459-479 (IVYHVFSMFALISLHIFLYGC). Residues 480-508 (NLFMWKNTRINHNFIFDFSSNTALTHRDA) lie on the Cytoplasmic side of the membrane. A helical membrane pass occupies residues 509-529 (FLMSASIMCTVVAALVINLFL). Topologically, residues 530-538 (KNAGVAYAN) are extracellular. Residues 539–559 (ALPGALLLLSTGVLFCPFDIF) traverse the membrane as a helical segment. The Cytoplasmic segment spans residues 560–686 (YRSTRYCFMR…VRFKYAATPT (127 aa)). The EXS domain maps to 624–815 (TSGQQYKHLA…PLPFRELETD (192 aa)). The chain crosses the membrane as a helical span at residues 687-707 (PFWVWMVIISSSGATIYQLYW). Topologically, residues 708–734 (DFVKDWGFLNPKSKNRWLRNELILKNK) are extracellular. Residues 735 to 751 (SIYYVSMMLNLALRLAW) form a helical membrane-spanning segment. Residues 752 to 815 (TESVMKIHIG…PLPFRELETD (64 aa)) lie on the Cytoplasmic side of the membrane.

Belongs to the SYG1 (TC 2.A.94) family. Specifically expressed in roots.

It localises to the cell membrane. In terms of biological role, involved in the transfer of inorganic phosphate (Pi) from roots to shoots. In Oryza sativa subsp. japonica (Rice), this protein is Phosphate transporter PHO1-2 (PHO1-2).